The sequence spans 279 residues: Diaminopimelate epimerase (279 aa).

3 residues coordinate substrate: asparagine 12, glutamine 45, and asparagine 65. Cysteine 74 (proton donor) is an active-site residue. Substrate-binding positions include 75–76 (GN), asparagine 162, asparagine 195, and 213–214 (ER). Cysteine 222 serves as the catalytic Proton acceptor. Substrate is bound at residue 223–224 (GS).

It belongs to the diaminopimelate epimerase family. As to quaternary structure, homodimer.

Its subcellular location is the cytoplasm. The enzyme catalyses (2S,6S)-2,6-diaminopimelate = meso-2,6-diaminopimelate. It participates in amino-acid biosynthesis; L-lysine biosynthesis via DAP pathway; DL-2,6-diaminopimelate from LL-2,6-diaminopimelate: step 1/1. Its function is as follows. Catalyzes the stereoinversion of LL-2,6-diaminopimelate (L,L-DAP) to meso-diaminopimelate (meso-DAP), a precursor of L-lysine and an essential component of the bacterial peptidoglycan. The protein is Diaminopimelate epimerase of Shewanella loihica (strain ATCC BAA-1088 / PV-4).